A 259-amino-acid chain; its full sequence is 14-3-3-like protein (259 aa).

The tract at residues 238–259 (MQDPAAGDDREGADMKVEDAEP) is disordered. Residues 244 to 259 (GDDREGADMKVEDAEP) are compositionally biased toward basic and acidic residues.

It belongs to the 14-3-3 family.

The chain is 14-3-3-like protein from Chlamydomonas reinhardtii (Chlamydomonas smithii).